The following is a 180-amino-acid chain: Cytidylate kinase (180 aa).

An ATP-binding site is contributed by 7–15 (GPPGSGTTT).

The protein belongs to the cytidylate kinase family. Type 2 subfamily.

Its subcellular location is the cytoplasm. The catalysed reaction is CMP + ATP = CDP + ADP. It carries out the reaction dCMP + ATP = dCDP + ADP. The polypeptide is Cytidylate kinase (cmk) (Archaeoglobus fulgidus (strain ATCC 49558 / DSM 4304 / JCM 9628 / NBRC 100126 / VC-16)).